The chain runs to 607 residues: Thymidine kinase (607 aa).

2 disordered regions span residues 1–160 (MAGF…ADST) and 180–215 (DDKS…PSGL). A compositionally biased stretch (basic and acidic residues) spans 17 to 32 (KCQEDESPENERHENF). 3 stretches are compositionally biased toward polar residues: residues 88-106 (AAVT…TSCP), 148-160 (RKTS…ADST), and 194-203 (RRPSSHSALK). 291–298 (GAPGVGKT) is an ATP binding site. Catalysis depends on Glu317, which acts as the Proton acceptor. Gln355 contributes to the substrate binding site. Arg445 provides a ligand contact to ATP. Substrate is bound at residue Arg451.

This sequence belongs to the herpesviridae thymidine kinase family. In terms of assembly, homodimer.

It localises to the virion tegument. Its subcellular location is the host nucleus. It carries out the reaction thymidine + ATP = dTMP + ADP + H(+). Catalyzes the transfer of the gamma-phospho group of ATP to thymidine to generate dTMP in the salvage pathway of pyrimidine synthesis. The dTMP serves as a substrate for DNA polymerase during viral DNA replication. Allows the virus to be reactivated and to grow in non-proliferative cells lacking a high concentration of phosphorylated nucleic acid precursors. In Epstein-Barr virus (strain GD1) (HHV-4), this protein is Thymidine kinase.